Here is a 498-residue protein sequence, read N- to C-terminus: Ribose import ATP-binding protein RbsA (498 aa).

2 ABC transporter domains span residues 2-237 (LALQ…VGRD) and 247-491 (VTPG…TGQQ). ATP is bound at residue 34–41 (GENGAGKS).

This sequence belongs to the ABC transporter superfamily. Ribose importer (TC 3.A.1.2.1) family. As to quaternary structure, the complex is composed of an ATP-binding protein (RbsA), two transmembrane proteins (RbsC) and a solute-binding protein (RbsB).

It is found in the cell membrane. It catalyses the reaction D-ribose(out) + ATP + H2O = D-ribose(in) + ADP + phosphate + H(+). Its function is as follows. Part of the ABC transporter complex RbsABC involved in ribose import. Responsible for energy coupling to the transport system. The chain is Ribose import ATP-binding protein RbsA from Deinococcus geothermalis (strain DSM 11300 / CIP 105573 / AG-3a).